Reading from the N-terminus, the 121-residue chain is uncharacterized protein (121 aa).

Disordered regions lie at residues 1–41 and 94–121; these read MRRQ…QESR and GGTI…GLRR. A compositionally biased stretch (polar residues) spans 98–108; the sequence is SGQQSRNSSLP.

As to expression, predominantly expressed in tissues containing motile cilia. Also expressed in non-motile ciliated adult olfactory bulbs.

The protein resides in the cytoplasm. The protein localises to the cytoskeleton. Its subcellular location is the cilium basal body. This is an uncharacterized protein from Mus musculus (Mouse).